The primary structure comprises 565 residues: MAVKHGVDGDGSEIESRTLAVDRKSGFCESTSIFYSKREPMALPPNQFLDVTSFIASQPHRGKTVFVDAVTGRRLSFPELWLGVERVAGCLYALGVRKGNVVIILSPNSILFPIVSLSVMSLGAIITTANPINTSDEISKQIGDSRPVLAFTTCKLVSKLAAASNFNLPVVLMDDYHVPSQSYGDRVKLVGRLETMIETEPSESRVKQRVNQDDTAALLYSSGTTGTSKGVMLSHRNLIALVQAYRARFGLEQRTICTIPMCHIFGFGGFATGLIALGWTIVVLPKFDMAKLLSAVETHRSSYLSLVPPIVVAMVNGANEINSKYDLSSLHTVVAGGAPLSREVTEKFVENYPKVKILQGYGLTESTAIAASMFNKEETKRYGASGLLAPNVEGKIVDPDTGRVLGVNQTGELWIRSPTVMKGYFKNKEATASTIDSEGWLKTGDLCYIDGDGFVFVVDRLKELIKCNGYQVAPAELEALLLAHPEIADAAVIPIPDMKAGQYPMAYIVRKVGSNLSESEIMGFVAKQVSPYKKIRKVTFLASIPKNPSGKILRRELTKLTTSKL.

Positions 221, 222, 223, 224, 225, and 229 each coordinate ATP. Residue Phe-265 coordinates (E)-4-coumaroyl-AMP. Lys-286 provides a ligand contact to CoA. The interval 288–359 is SBD1; the sequence is DMAKLLSAVE…ENYPKVKILQ (72 aa). (E)-4-coumaroyl-AMP-binding residues include Gly-337, Gln-359, Gly-360, and Thr-364. 5 residues coordinate ATP: Gln-359, Gly-360, Thr-364, Asp-445, and Arg-460. The tract at residues 360–424 is SBD2; the sequence is GYGLTESTAI…IRSPTVMKGY (65 aa). Positions 462 and 466 each coordinate (E)-4-coumaroyl-AMP. Residue Gly-469 participates in CoA binding. Lys-551 provides a ligand contact to ATP. The Microbody targeting signal signature appears at 563–565; that stretch reads SKL.

The protein belongs to the ATP-dependent AMP-binding enzyme family. The cofactor is Mg(2+).

It is found in the peroxisome. The enzyme catalyses (E)-4-coumarate + ATP + CoA = (E)-4-coumaroyl-CoA + AMP + diphosphate. It carries out the reaction (E)-4-coumarate + ATP + H(+) = (E)-4-coumaroyl-AMP + diphosphate. The catalysed reaction is (E)-4-coumaroyl-AMP + CoA = (E)-4-coumaroyl-CoA + AMP + H(+). In terms of biological role, carboxylate--CoA ligase that may use 4-coumarate as substrate. Follows a two-step reaction mechanism, wherein the carboxylate substrate first undergoes adenylation by ATP, followed by a thioesterification in the presence of CoA to yield the final CoA thioester. In Arabidopsis thaliana (Mouse-ear cress), this protein is 4-coumarate--CoA ligase-like 2.